The chain runs to 68 residues: Frenatin-3 (68 aa).

The first 22 residues, 1-22 (MHFLKKSIFLVLFLGLVSLSIC), serve as a signal peptide directing secretion. The propeptide occupies 23–46 (EKEKREDQNEEEVDENEEESEEKR). Residues 26-47 (KREDQNEEEVDENEEESEEKRG) form a disordered region. Residues 30–42 (QNEEEVDENEEES) show a composition bias toward acidic residues.

The protein belongs to the frog skin active peptide (FSAP) family. Frenatin subfamily. As to expression, expressed by the granular skin glands.

The protein resides in the secreted. In terms of biological role, antimicrobial peptide with activity against both Gram-positive and Gram-negative bacteria. Antibacterial activities have been tested against Bacillus cereus (MIC=12.5 ug/ml), Escherichia coli (MIC=50 ug/ml), Leuconostoc mesenteroides (MIC=25 ug/ml), Micrococcus luteus (MIC=1.5 ug/ml), Pastewella haemolytica (MIC=0.8 ug/ml), Staphylococcus aureus (MIC&lt;l00 ug/ml), Streptococcus faecalis (MIC&lt;150 ug/ml) and Streptococcus uberis (MIC=50 ug/ml). Strongly inhibits the formation of NO by neuronal nitric oxide synthase (nNOS) at micromolar concentrations. Acts by a non-competitive mechanism, probably by binding to calcium/calmodulin and as a consequence blocking calmodulin attachment to nNOS. The protein is Frenatin-3 of Nyctimystes infrafrenatus (White-lipped tree frog).